We begin with the raw amino-acid sequence, 1002 residues long: MSGLSNKRAAGDGGSGPPEKKLNREEKTTTTLIEPIRLGGISSTEEMDSKVLQFKNKKLAERLEQRQACEDELRERIEKLEKRQATDDATLLIVNRYWAQLDETVEALLQCYENQRELSSSGTEVPGCQEGLTRDVIPRTDPGTSDLREPLPMQFRAPLSEPALAFVVALGASSCEEVELQLQGRMEFSKAAVSRVVEASDRLQRQVEELCQRVYSRGDSEAPGEVARARTRELGRENRRLQDLATQLQEKHHRISLEYSELQDKVTSTETKVLEMETTVEDLQWDIEKLRKREQKLNKHLAEALEQLNSGYYVSGSSTGFQGGQITLSMQKFEMLNAELEENQELANSRMAELEKLQAELQGAVRTNERLKVALRSLPEEVVRETGEYRMLQAQFSLLYNESLQVKTQLDEARGLLLASKNSHLRHIEHMESDELGLQKKLRTEVIQLEDTLAQVRKEYEMLRIEFEQNLAANEQAGPINREMRHLISSLQNHNHQLKGDAQRYKRKLREVQAEIGKLRAQASGSSHCGPNLSHPDDSGLNALAPGKEDSGPGPGGTPDSKKELALVAGATSVASSVKKEELVSSEDDAQALAPGTQGLPSRGREPEARPKRELREREGPSLGPPPAASTLSRADREKAKAEEARRKESELLKGLRAELKKAQESQKEMKLLLDMYKSAPKEQRDKVQLMAAERKAKAEVDELRSRIRDLEERDRRESKKIADEDALRRIRQAEEQIEHLQRKLGATKQEEEALLSEMDVTGQAFEDMQEQNGRLLQQLREKDDANFKLMSERIKANQIHKLLREEKDELGEQVLGLKSQVDAQLLTVQKLEEKERALQGSLGGVEKELTLRSQALELNKRKAVEAAQLAEDLKVQLEHVQTRLREIQPCLAESRAAREKESFNLKRAQEDISRLRRKLEKQRKVEVYADADEILQEEIKEYKARLTCPCCNTRKKDAVLTKCFHVFCFECVRGRYEARQRKCPKCNAAFGAHDFHRVYIS.

Residues 1 to 32 (MSGLSNKRAAGDGGSGPPEKKLNREEKTTTTL) form a disordered region. Residues 18-28 (PEKKLNREEKT) show a composition bias toward basic and acidic residues. Lysine 20 carries the N6-acetyllysine modification. Serine 42 bears the Phosphoserine mark. Residues 55-91 (KNKKLAERLEQRQACEDELRERIEKLEKRQATDDATL) are a coiled coil. Positions 120 to 148 (SSGTEVPGCQEGLTRDVIPRTDPGTSDLR) are disordered. Coiled-coil stretches lie at residues 190–378 (KAAV…LRSL) and 438–526 (LQKK…ASGS). Lysine 356 and lysine 518 each carry N6-acetyllysine. Disordered regions lie at residues 520 to 562 (RAQA…PDSK) and 579 to 652 (KKEE…ESEL). Residues lysine 579 and lysine 580 each participate in a glycyl lysine isopeptide (Lys-Gly) (interchain with G-Cter in SUMO2) cross-link. 2 positions are modified to phosphoserine: serine 585 and serine 586. 2 stretches are compositionally biased toward basic and acidic residues: residues 603-620 (RGRE…EREG) and 634-652 (RADR…ESEL). Residues 628–947 (AASTLSRADR…EEIKEYKARL (320 aa)) are a coiled coil. The segment at 949–988 (CPCCNTRKKDAVLTKCFHVFCFECVRGRYEARQRKCPKCN) adopts an RING-type zinc-finger fold.

This sequence belongs to the BRE1 family. As to quaternary structure, component of the RNF20/40 complex (also known as BRE1 complex) probably composed of 2 copies of RNF20/BRE1A and 2 copies of RNF40/BRE1B. Interacts with UBE2E1/UBCH6. Interacts with RB1 and WAC. May interact with STX1A. Ubiquitously expressed. Expressed in brain, testis, heart, liver and kidney. Weakly expressed in lung, spleen and skeletal muscle (at protein level).

It localises to the nucleus. The enzyme catalyses S-ubiquitinyl-[E2 ubiquitin-conjugating enzyme]-L-cysteine + [acceptor protein]-L-lysine = [E2 ubiquitin-conjugating enzyme]-L-cysteine + N(6)-ubiquitinyl-[acceptor protein]-L-lysine.. It participates in protein modification; protein ubiquitination. Its function is as follows. Component of the RNF20/40 E3 ubiquitin-protein ligase complex that mediates monoubiquitination of 'Lys-120' of histone H2B (H2BK120ub1). H2BK120ub1 gives a specific tag for epigenetic transcriptional activation and is also prerequisite for histone H3 'Lys-4' and 'Lys-79' methylation (H3K4me and H3K79me, respectively). It thereby plays a central role in histone code and gene regulation. The RNF20/40 complex forms a H2B ubiquitin ligase complex in cooperation with the E2 enzyme UBE2A or UBE2B; reports about the cooperation with UBE2E1/UBCH are contradictory. Required for transcriptional activation of Hox genes. The protein is E3 ubiquitin-protein ligase BRE1B (Rnf40) of Rattus norvegicus (Rat).